The following is a 777-amino-acid chain: MGSGGVIHCRCAKCFCYPTKRRIKRRPRNLTILSLPEDVLFHILKWLSVGDILAVRAVHSHLKYLVDNHASVWASASFQELWPSPQNLKLFERAAEKGNFEAAVKLGIAYLYNEGLSVSDEACAEVNGLKASRFFSMAERLNTGSEPFIWLFIRPPWSVSGSCCKAVVHDSLRAECQLQRSHKASILHCLGRVLNLFEDEEKRKQARSLLEESSRQGCLISSYLLWESDRKVDMSDPGRCLHSFRKLRDYAAKGCWEAQLALAKACAGGSQLGLEGKACSESVCQLFQASQAVNKQQIFSVQKGLSDTMRYILIDWLVEVATMKDFTSLCLHLTVECVDRYLRRRLVPRYKLQLLGIACMVICTRFISKEILTIREAVWLTDNTYKYEDLVRVMGEIISALEGKIRIPTVVDYKEVLLTLVPVAPRTQHLCSFLCELTLLHTSLSIYAPARLASAALLLARLMHGQTQPWTTHLWDLTGFSYSDLVPCVLSLHKKCFHDDAPKDYRQVSLTAVKQRFEDKCYEEISREEVLSYADLCSTIGVKQESPEPPSFPSSGEIHTFLSSPSGRRSKRKRENSLQEDRGSFVTTPTAELSNQEETLLGSLLDWSLECCSGYEGDQESEGEKEGDVTAPSRLLDVTVVYLNPEEHCCQESSDEEAWPEDKIHPAPGTQAPPASAPRPLLCNRGDRAKDITTSGYSSVSSSSPISSLDGGMGGSPQSTSVLSVGSHSSTKPCHHQAKKSCLQCRPPNSPESGVHQQPVKRQNLSVHSDKDMHLAS.

The short motif at 20-28 (KRRIKRRPR) is the Nuclear localization signal 1 element. The region spanning 29–76 (NLTILSLPEDVLFHILKWLSVGDILAVRAVHSHLKYLVDNHASVWASA) is the F-box domain. Residues 288–405 (QASQAVNKQQ…EIISALEGKI (118 aa)) enclose the Cyclin N-terminal domain. 3 consecutive short sequence motifs (d box) follow at residues 310–313 (RYIL), 343–346 (RRRL), and 349–352 (RYKL). 2 disordered regions span residues 544 to 591 (QESP…TPTA) and 651 to 777 (QESS…HLAS). The Nuclear localization signal 2 signature appears at 568 to 574 (RRSKRKR). The PEST stretch occupies residues 582–761 (RGSFVTTPTA…ESGVHQQPVK (180 aa)). Composition is skewed to low complexity over residues 695–708 (SGYS…PISS) and 719–731 (STSV…HSST). Residues 751 to 767 (PESGVHQQPVKRQNLSV) are compositionally biased toward polar residues. Residues 762–765 (RQNL) carry the D box 4 motif. Positions 768–777 (HSDKDMHLAS) are enriched in basic and acidic residues.

Belongs to the cyclin family. Cyclin AB subfamily. As to quaternary structure, component of the SCF(CCNF) complex consisting of CUL1, RBX1, SKP1 and CCNF. Interacts with SKP1. Interacts with CUL1. Interacts with CCNB1; interaction is required for nuclear localization of CCNB1. Interacts with CCP110; this interaction leads to CCP110 ubiquitination and degradation via the proteasome pathway. Interacts (via the Cyclin N-terminal domain) with MYBL2/BMYB. Interacts with FZR1/CDH1 (via N-terminus). Interacts with RRM2 (via Cy motif and when phosphorylated at 'Thr-33'); the interaction occurs exclusively in G2 and early M. Interacts with CDC6 (via Cy motif); the interaction takes place during G2 and M phase. Degraded when the spindle assembly checkpoint is activated during the G2-M transition. Degradation is not dependent on the proteasome or ubiquitin and depends on the C-terminal PEST sequence. In terms of processing, phosphorylated just before cells enter into mitosis. Post-translationally, ubiquitinated by the anaphase-promoting complex (APC/C); leading to its degradation by the proteasome.

The protein resides in the nucleus. It localises to the cytoplasm. Its subcellular location is the perinuclear region. It is found in the cytoskeleton. The protein localises to the microtubule organizing center. The protein resides in the centrosome. It localises to the centriole. In terms of biological role, substrate recognition component of a SCF (SKP1-CUL1-F-box protein) E3 ubiquitin-protein ligase complex which mediates the ubiquitination and subsequent proteasomal degradation of target proteins. The SCF(CCNF) E3 ubiquitin-protein ligase complex is an integral component of the ubiquitin proteasome system (UPS) and links proteasome degradation to the cell cycle. Mediates the substrate recognition and the proteasomal degradation of various target proteins involved in the regulation of cell cycle progression and in the maintenance of genome stability. Mediates the ubiquitination and subsequent proteasomal degradation of CP110 during G2 phase, thereby acting as an inhibitor of centrosome reduplication. In G2, mediates the ubiquitination and proteasomal degradation of CDC6, thereby suppressing DNA re-replication and preventing genome instability. Involved in the ubiquitination and degradation of the substrate adapter CDH1 of the anaphase-promoting complex (APC/C), thereby acting as an antagonist of APC/C in regulating G1 progression and S phase entry. May play a role in the G2 cell cycle checkpoint control after DNA damage, possibly by promoting the ubiquitination of MYBL2/BMYB. The polypeptide is Cyclin-F (Ccnf) (Mus musculus (Mouse)).